Here is a 136-residue protein sequence, read N- to C-terminus: Ribosome-binding factor A (136 aa).

It belongs to the RbfA family. In terms of assembly, monomer. Binds 30S ribosomal subunits, but not 50S ribosomal subunits or 70S ribosomes.

Its subcellular location is the cytoplasm. Functionally, one of several proteins that assist in the late maturation steps of the functional core of the 30S ribosomal subunit. Associates with free 30S ribosomal subunits (but not with 30S subunits that are part of 70S ribosomes or polysomes). Required for efficient processing of 16S rRNA. May interact with the 5'-terminal helix region of 16S rRNA. This Yersinia enterocolitica serotype O:8 / biotype 1B (strain NCTC 13174 / 8081) protein is Ribosome-binding factor A.